Here is a 336-residue protein sequence, read N- to C-terminus: Cytoskeleton protein RodZ (336 aa).

The Cytoplasmic segment spans residues 1–111; the sequence is MNTEATHDQN…LGKRRKKRDG (111 aa). Residues 19 to 71 enclose the HTH cro/C1-type domain; the sequence is LRNAREQLGLSQQAVAERLCLKVSTVRDIEEDKAPADLASTFLRGYIRSYARL. The H-T-H motif DNA-binding region spans 30–49; it reads QQAVAERLCLKVSTVRDIEE. A helical; Signal-anchor for type II membrane protein membrane pass occupies residues 112–132; sequence WLMTFTWLVLFVVIGLSGAWW. Residues 133–336 lie on the Periplasmic side of the membrane; sequence WQDHKAQQEE…TLNAEQSPAQ (204 aa). A compositionally biased stretch (polar residues) spans 148–164; sequence DQSSAELNNNQSQSVPL. Residues 148-248 are disordered; that stretch reads DQSSAELNNN…TDQAGVTTPA (101 aa). Residues 165-201 are compositionally biased toward low complexity; it reads DTSTTTDQAMATTPTSPVDTTATNTQTPAATTAPSPT. Residues 202–217 are compositionally biased toward polar residues; sequence VDSQQNAVVPPSQANV. Residues 219-236 are compositionally biased toward low complexity; that stretch reads TAATPAPAATTMPDGAAP.

It belongs to the RodZ family.

The protein localises to the cell inner membrane. In terms of biological role, cytoskeletal protein that is involved in cell-shape control through regulation of the length of the long axis. This is Cytoskeleton protein RodZ from Escherichia coli (strain SMS-3-5 / SECEC).